Consider the following 331-residue polypeptide: Pyruvate synthase subunit PorB (331 aa).

Positions 21, 24, 59, and 222 each coordinate [4Fe-4S] cluster.

Heterotetramer of one alpha, one beta, one delta and one gamma chain. Requires [4Fe-4S] cluster as cofactor.

The catalysed reaction is 2 oxidized [2Fe-2S]-[ferredoxin] + pyruvate + CoA = 2 reduced [2Fe-2S]-[ferredoxin] + acetyl-CoA + CO2 + H(+). This is Pyruvate synthase subunit PorB (porB) from Pyrococcus horikoshii (strain ATCC 700860 / DSM 12428 / JCM 9974 / NBRC 100139 / OT-3).